Reading from the N-terminus, the 150-residue chain is Propanediol utilization protein PduV (150 aa).

Residues 1–42 (MKRIMLIGPSQCGKTSLTQCMRGEALHYQKTQAIVWSPTTID) are targets protein to the BMC. 8-15 (GPSQCGKT) serves as a coordination point for GTP.

It belongs to the EutP/PduV family. As to quaternary structure, interacts with PduU, probably via the PduU beta-barrel which is predicted by modeling to be on the exterior of the BMC.

It localises to the bacterial microcompartment. The protein operates within polyol metabolism; 1,2-propanediol degradation. In terms of biological role, may play a role in the spatial distribution of the bacterial microcompartment (BMC) dedicated to 1,2-PD degradation, perhaps being involved in cytoskeleton dynamics; might bind GTP. This subunit is directly targeted to the BMC. Expression of a cosmid containing the full 21-gene pdu operon in E.coli allows E.coli to grow on 1,2-propanediol (1,2-PD) with the appearance of bacterial microcompartments (BMC) in its cytoplasm. Its function is as follows. The 1,2-PD-specific bacterial microcompartment (BMC) concentrates low levels of 1,2-PD catabolic enzymes, concentrates volatile reaction intermediates thus enhancing pathway flux and keeps the level of toxic, mutagenic propionaldehyde low. This is Propanediol utilization protein PduV from Citrobacter freundii.